Here is a 170-residue protein sequence, read N- to C-terminus: Large ribosomal subunit protein uL18m (170 aa).

This sequence belongs to the universal ribosomal protein uL18 family. In terms of assembly, component of the mitochondrial ribosome large subunit (39S) which comprises a 16S rRNA and about 50 distinct proteins.

Its subcellular location is the mitochondrion. The sequence is that of Large ribosomal subunit protein uL18m (mrpl-18) from Caenorhabditis elegans.